The sequence spans 628 residues: FAD-linked oxidoreductase easE (628 aa).

Residues 1–20 form the signal peptide; the sequence is MSHRILCVAFCVCSLVAVSS. Residues 144-328 form the FAD-binding PCMH-type domain; sequence HQGRIPLYSA…TRATMRVHLN (185 aa). His-182 carries the pros-8alpha-FAD histidine modification. N-linked (GlcNAc...) asparagine glycans are attached at residues Asn-343, Asn-382, and Asn-487.

The protein belongs to the oxygen-dependent FAD-linked oxidoreductase family. FAD serves as cofactor.

Its pathway is alkaloid biosynthesis; ergot alkaloid biosynthesis. In terms of biological role, FAD binding oxidoreductase; part of the gene cluster that mediates the biosynthesis of fumiclavanine C, a fungal ergot alkaloid. DmaW catalyzes the first step of ergot alkaloid biosynthesis by condensing dimethylallyl diphosphate (DMAP) and tryptophan to form 4-dimethylallyl-L-tryptophan. The second step is catalyzed by the methyltransferase easF that methylates 4-dimethylallyl-L-tryptophan in the presence of S-adenosyl-L-methionine, resulting in the formation of 4-dimethylallyl-L-abrine. The catalase easC and the FAD-dependent oxidoreductase easE then transform 4-dimethylallyl-L-abrine to chanoclavine-I which is further oxidized by EasD in the presence of NAD(+), resulting in the formation of chanoclavine-I aldehyde. EasA reduces chanoclavine-I aldehyde to dihydrochanoclavine-I aldehyde that spontaneously dehydrates to form 6,8-dimethyl-6,7-didehydroergoline. EasG then catalyzes the reduction of 6,8-dimethyl-6,7-didehydroergoline to form festuclavine. Hydrolysis of festuclavine by easM then leads to the formation of fumigaclavine B which is in turn acetylated by easN to fumigaclavine A. Finally, easL catalyzes the conversion of fumigaclavine A into fumigaclavine C by attaching a dimethylallyl moiety to C-2 of the indole nucleus. This is FAD-linked oxidoreductase easE from Aspergillus fumigatus (strain ATCC MYA-4609 / CBS 101355 / FGSC A1100 / Af293) (Neosartorya fumigata).